Consider the following 150-residue polypeptide: 3-dehydroquinate dehydratase (150 aa).

Tyr26 serves as the catalytic Proton acceptor. Substrate is bound by residues Asn77, His83, and Asp90. His103 functions as the Proton donor in the catalytic mechanism. Substrate is bound by residues 104-105 (LS) and Arg114.

Belongs to the type-II 3-dehydroquinase family. In terms of assembly, homododecamer.

It carries out the reaction 3-dehydroquinate = 3-dehydroshikimate + H2O. It participates in metabolic intermediate biosynthesis; chorismate biosynthesis; chorismate from D-erythrose 4-phosphate and phosphoenolpyruvate: step 3/7. Catalyzes a trans-dehydration via an enolate intermediate. This is 3-dehydroquinate dehydratase from Photorhabdus laumondii subsp. laumondii (strain DSM 15139 / CIP 105565 / TT01) (Photorhabdus luminescens subsp. laumondii).